The following is a 427-amino-acid chain: Enolase (427 aa).

Gln-162 is a (2R)-2-phosphoglycerate binding site. The active-site Proton donor is the Glu-204. Mg(2+)-binding residues include Asp-241, Glu-282, and Asp-309. Residues Lys-334, Arg-363, Ser-364, and Lys-385 each contribute to the (2R)-2-phosphoglycerate site. Lys-334 (proton acceptor) is an active-site residue.

Belongs to the enolase family. Requires Mg(2+) as cofactor.

The protein resides in the cytoplasm. Its subcellular location is the secreted. The protein localises to the cell surface. It catalyses the reaction (2R)-2-phosphoglycerate = phosphoenolpyruvate + H2O. Its pathway is carbohydrate degradation; glycolysis; pyruvate from D-glyceraldehyde 3-phosphate: step 4/5. In terms of biological role, catalyzes the reversible conversion of 2-phosphoglycerate (2-PG) into phosphoenolpyruvate (PEP). It is essential for the degradation of carbohydrates via glycolysis. The polypeptide is Enolase (Frankia casuarinae (strain DSM 45818 / CECT 9043 / HFP020203 / CcI3)).